A 147-amino-acid polypeptide reads, in one-letter code: Hemoglobin subunit gamma (147 aa).

The Globin domain maps to 3–147 (HFTVEEKAVI…VAIALAHKYH (145 aa)). Residues His64 and His93 each coordinate heme b.

It belongs to the globin family. In terms of assembly, heterotetramer of two alpha chains and two gamma chains in fetal hemoglobin (Hb F). In terms of tissue distribution, red blood cells.

Its function is as follows. Gamma chains make up the fetal hemoglobin F, in combination with alpha chains. The chain is Hemoglobin subunit gamma (HBG) from Cheirogaleus medius (Fat-tailed dwarf lemur).